The chain runs to 138 residues: MARTKQTARKSTGGKAPRKQLATKAARKQAPSQVSGGVKKPHRYRPGTVALREIRRYQKSTELLIRKLPFQRLVREIAQDFKTDLRFQSSAIGALQEASEAYLVSLFEDTNLAAIHAKRVTIQPKDLQLARRLRGERS.

Residues 1-49 are disordered; that stretch reads MARTKQTARKSTGGKAPRKQLATKAARKQAPSQVSGGVKKPHRYRPGTV. The residue at position 5 (lysine 5) is an N6,N6,N6-trimethyllysine; alternate. Lysine 5 is subject to N6,N6-dimethyllysine; alternate. N6-methyllysine; alternate is present on residues lysine 5 and lysine 10. The residue at position 10 (lysine 10) is an N6-acetyllysine; alternate. Serine 11 is subject to Phosphoserine. Residue lysine 15 is modified to N6,N6-dimethyllysine; alternate. N6-methyllysine; alternate occurs at positions 15, 19, 24, 28, and 39. Residues lysine 15, lysine 19, lysine 24, lysine 28, and lysine 39 each carry the N6-acetyllysine; alternate modification. N6,N6,N6-trimethyllysine; alternate is present on residues lysine 28 and lysine 39. 2 positions are modified to N6,N6-dimethyllysine; alternate: lysine 28 and lysine 39. 2 positions are modified to N6-acetyllysine: lysine 59 and lysine 67. Residue lysine 82 is modified to N6,N6,N6-trimethyllysine; alternate. Lysine 82 is subject to N6,N6-dimethyllysine; alternate. Residue lysine 82 is modified to N6-methyllysine; alternate.

This sequence belongs to the histone H3 family. The nucleosome is a histone octamer containing two molecules each of H2A, H2B, H3 and H4 assembled in one H3-H4 heterotetramer and two H2A-H2B heterodimers. The octamer wraps approximately 147 bp of DNA. Post-translationally, phosphorylated to form H3S10ph. H3S10ph promotes subsequent H3K14ac formation and is required for transcriptional activation through TBP recruitment to the promoters. In terms of processing, mono-, di- and trimethylated by the COMPASS complex to form H3K4me1/2/3. H3K4me activates gene expression by regulating transcription elongation and plays a role in telomere length maintenance. H3K4me enrichment correlates with transcription levels, and occurs in a 5' to 3' gradient with H3K4me3 enrichment at the 5'-end of genes, shifting to H3K4me2 and then H3K4me1. Methylated by SET2 to form H3K36me. H3K36me represses gene expression. Methylated by DOT1 to form H3K79me. H3K79me is required for association of SIR proteins with telomeric regions and for telomeric silencing. The COMPASS-mediated formation of H3K4me2/3 and the DOT1-mediated formation of H3K79me require H2BK123ub1. Acetylation of histone H3 leads to transcriptional activation. H3K14ac formation by GCN5 is promoted by H3S10ph. H3K14ac can also be formed by ESA1. H3K56ac formation occurs predominantly in newly synthesized H3 molecules during G1, S and G2/M of the cell cycle and may be involved in DNA repair.

Its subcellular location is the nucleus. It localises to the chromosome. Its function is as follows. Core component of nucleosome. Nucleosomes wrap and compact DNA into chromatin, limiting DNA accessibility to the cellular machineries which require DNA as a template. Histones thereby play a central role in transcription regulation, DNA repair, DNA replication and chromosomal stability. DNA accessibility is regulated via a complex set of post-translational modifications of histones, also called histone code, and nucleosome remodeling. The polypeptide is Histone H3 (HHT1) (Cryptococcus neoformans var. neoformans serotype D (strain B-3501A) (Filobasidiella neoformans)).